We begin with the raw amino-acid sequence, 242 residues long: HTH-type transcriptional regulator GadW (242 aa).

One can recognise an HTH araC/xylS-type domain in the interval glycine 139–histidine 236. 2 DNA-binding regions (H-T-H motif) span residues arginine 156–asparagine 177 and leucine 203–tyrosine 226.

Homodimer.

In terms of biological role, depending on the conditions (growth phase and medium), acts as a positive or negative regulator of gadA and gadBC. Repression occurs directly or via the repression of the expression of gadX. Activation occurs directly by the binding of GadW to the gadA and gadBC promoters. The chain is HTH-type transcriptional regulator GadW (gadW) from Escherichia coli (strain K12).